The primary structure comprises 396 residues: Phosphopentomutase (396 aa).

Residues Asp13, Asp288, His293, Asp329, His330, and His341 each coordinate Mn(2+).

It belongs to the phosphopentomutase family. Requires Mn(2+) as cofactor.

Its subcellular location is the cytoplasm. It carries out the reaction 2-deoxy-alpha-D-ribose 1-phosphate = 2-deoxy-D-ribose 5-phosphate. The enzyme catalyses alpha-D-ribose 1-phosphate = D-ribose 5-phosphate. Its pathway is carbohydrate degradation; 2-deoxy-D-ribose 1-phosphate degradation; D-glyceraldehyde 3-phosphate and acetaldehyde from 2-deoxy-alpha-D-ribose 1-phosphate: step 1/2. Functionally, isomerase that catalyzes the conversion of deoxy-ribose 1-phosphate (dRib-1-P) and ribose 1-phosphate (Rib-1-P) to deoxy-ribose 5-phosphate (dRib-5-P) and ribose 5-phosphate (Rib-5-P), respectively. The sequence is that of Phosphopentomutase from Clostridium perfringens (strain ATCC 13124 / DSM 756 / JCM 1290 / NCIMB 6125 / NCTC 8237 / Type A).